A 188-amino-acid chain; its full sequence is GMP synthase [glutamine-hydrolyzing] subunit A (188 aa).

Residues 1–188 (MIIIMDNGGQ…RNFAKICGEL (188 aa)) enclose the Glutamine amidotransferase type-1 domain. C78 serves as the catalytic Nucleophile. Residues H165 and E167 contribute to the active site.

In terms of assembly, heterodimer composed of a glutamine amidotransferase subunit (A) and a GMP-binding subunit (B).

The enzyme catalyses XMP + L-glutamine + ATP + H2O = GMP + L-glutamate + AMP + diphosphate + 2 H(+). It functions in the pathway purine metabolism; GMP biosynthesis; GMP from XMP (L-Gln route): step 1/1. In terms of biological role, catalyzes the synthesis of GMP from XMP. This is GMP synthase [glutamine-hydrolyzing] subunit A from Pyrococcus furiosus (strain ATCC 43587 / DSM 3638 / JCM 8422 / Vc1).